A 286-amino-acid polypeptide reads, in one-letter code: Ribosomal RNA small subunit methyltransferase A (286 aa).

The S-adenosyl-L-methionine site is built by asparagine 28, leucine 30, glycine 55, glutamate 77, aspartate 103, and asparagine 123.

It belongs to the class I-like SAM-binding methyltransferase superfamily. rRNA adenine N(6)-methyltransferase family. RsmA subfamily.

It localises to the cytoplasm. It catalyses the reaction adenosine(1518)/adenosine(1519) in 16S rRNA + 4 S-adenosyl-L-methionine = N(6)-dimethyladenosine(1518)/N(6)-dimethyladenosine(1519) in 16S rRNA + 4 S-adenosyl-L-homocysteine + 4 H(+). Its function is as follows. Specifically dimethylates two adjacent adenosines (A1518 and A1519) in the loop of a conserved hairpin near the 3'-end of 16S rRNA in the 30S particle. May play a critical role in biogenesis of 30S subunits. In Bradyrhizobium sp. (strain ORS 278), this protein is Ribosomal RNA small subunit methyltransferase A.